The following is a 186-amino-acid chain: Ribonuclease M5 (186 aa).

Residues 4–94 form the Toprim domain; it reads KEIIVVEGRD…AKPKNKRGIG (91 aa). Positions 10, 56, and 58 each coordinate Mg(2+).

The protein belongs to the ribonuclease M5 family. Requires ribosomal protein L18 (rplR) for catalysis; it can be replaced by 30% dimethylsulfoxide suggesting L18 functions as an rRNA folding chaperone. Mg(2+) is required as a cofactor. The cofactor is Mn(2+). Ca(2+) serves as cofactor.

Its subcellular location is the cytoplasm. The enzyme catalyses Endonucleolytic cleavage of RNA, removing 21 and 42 nucleotides, respectively, from the 5'- and 3'-termini of a 5S-rRNA precursor.. Its function is as follows. Required for correct processing of both the 5' and 3' ends of 5S rRNA precursor. Cleaves both sides of a double-stranded region yielding mature 5S rRNA in one step. Releases 5'-phosphoryl and 3'-hydroxy termini. This chain is Ribonuclease M5, found in Bacillus subtilis (strain 168).